We begin with the raw amino-acid sequence, 154 residues long: Egg-lysin (154 aa).

The signal sequence occupies residues 1 to 18 (MKLLVLWVFAMMATVAMS).

As to quaternary structure, monomer. Homodimer. Molecules associate into dimers and then rapidly dissociate again. Interacts (as a monomer) with the egg vitelline layer protein VERL (via VERL repeats); each VERL chain can bind multiple copies of lysin. As to expression, sperm.

The protein resides in the cytoplasmic vesicle. It is found in the secretory vesicle. The protein localises to the acrosome lumen. Creates a 3 um hole in the egg vitelline layer through which the sperm passes. Does not have enzyme activity. Species-specific interaction between the sperm protein lysin and the egg protein VERL exposes a basic surface on lysin that may dissociate the egg vitelline layer via electrostatic repulsion. Plays a role in ensuring species-specific fertilization. The sequence is that of Egg-lysin from Haliotis fulgens (Green abalone).